A 204-amino-acid chain; its full sequence is Thymidine kinase (204 aa).

Residues 23–30 (GSMFSGKT) and 95–98 (DEAQ) each bind ATP. The active-site Proton acceptor is Glu-96. Cys-152, Cys-155, Cys-184, and Cys-187 together coordinate Zn(2+).

Belongs to the thymidine kinase family. As to quaternary structure, homotetramer.

Its subcellular location is the cytoplasm. The enzyme catalyses thymidine + ATP = dTMP + ADP + H(+). The polypeptide is Thymidine kinase (Porphyromonas gingivalis (strain ATCC 33277 / DSM 20709 / CIP 103683 / JCM 12257 / NCTC 11834 / 2561)).